The primary structure comprises 316 residues: Bifunctional peptidase and (3S)-lysyl hydroxylase JMJD7 (316 aa).

One can recognise a JmjC domain in the interval 128–307 (VQKQCSNLPS…LKYSYFQLLD (180 aa)). Residues His-178, Asp-180, and His-277 each contribute to the Fe cation site.

As to quaternary structure, homodimer; disulfide-linked. Interacts with DRG1 and DRG2. Requires Fe(2+) as cofactor.

It localises to the nucleus. Its subcellular location is the cytoplasm. The enzyme catalyses L-lysyl-[protein] + 2-oxoglutarate + O2 = (3S)-3-hydroxy-L-lysyl-[protein] + succinate + CO2. Its function is as follows. Bifunctional enzyme that acts both as an endopeptidase and 2-oxoglutarate-dependent monooxygenase. Endopeptidase that cleaves histones N-terminal tails at the carboxyl side of methylated arginine or lysine residues, to generate 'tailless nucleosomes', which may trigger transcription elongation. Preferentially recognizes and cleaves monomethylated and dimethylated arginine residues of histones H2, H3 and H4. After initial cleavage, continues to digest histones tails via its aminopeptidase activity. Additionally, may play a role in protein biosynthesis by modifying the translation machinery. Acts as a Fe(2+) and 2-oxoglutarate-dependent monooxygenase, catalyzing (S)-stereospecific hydroxylation at C-3 of 'Lys-22' of DRG1 and 'Lys-21' of DRG2 translation factors (TRAFAC), promoting their interaction with ribonucleic acids (RNA). The polypeptide is Bifunctional peptidase and (3S)-lysyl hydroxylase JMJD7 (Homo sapiens (Human)).